The chain runs to 343 residues: Cysteine proteinase 1 (343 aa).

Residues 1-18 form the signal peptide; sequence MKVILLFVLAVFTVFVSS. Residues 19–117 constitute a propeptide, activation peptide; sequence RGIPLEEQSQ…DYLDDEFINS (99 aa). Cystine bridges form between Cys-139/Cys-190, Cys-173/Cys-224, and Cys-279/Cys-332. Cys-142 is an active-site residue. Residues His-286 and Asn-311 contribute to the active site.

Belongs to the peptidase C1 family. Post-translationally, phosphoglycosylated, contains GlcNAc-alpha-1-P-Ser residues.

It localises to the lysosome. Its function is as follows. Cysteine proteinases 1 and 2 are believed to participate in the breakdown of protein during differentiation of Dictyostelium as a response to starvation. The polypeptide is Cysteine proteinase 1 (cprA) (Dictyostelium discoideum (Social amoeba)).